The following is a 34-amino-acid chain: MEVNILAFIATALFILIPTAFLLILYVQTAAQNN.

The chain crosses the membrane as a helical span at residues 5 to 25 (ILAFIATALFILIPTAFLLIL).

It belongs to the PsbM family. As to quaternary structure, PSII is composed of 1 copy each of membrane proteins PsbA, PsbB, PsbC, PsbD, PsbE, PsbF, PsbH, PsbI, PsbJ, PsbK, PsbL, PsbM, PsbT, PsbX, PsbY, PsbZ, Psb30/Ycf12, at least 3 peripheral proteins of the oxygen-evolving complex and a large number of cofactors. It forms dimeric complexes.

The protein resides in the plastid. It is found in the chloroplast thylakoid membrane. In terms of biological role, one of the components of the core complex of photosystem II (PSII). PSII is a light-driven water:plastoquinone oxidoreductase that uses light energy to abstract electrons from H(2)O, generating O(2) and a proton gradient subsequently used for ATP formation. It consists of a core antenna complex that captures photons, and an electron transfer chain that converts photonic excitation into a charge separation. This subunit is found at the monomer-monomer interface. The polypeptide is Photosystem II reaction center protein M (Angiopteris evecta (Mule's foot fern)).